The following is a 472-amino-acid chain: Proline--tRNA ligase (472 aa).

This sequence belongs to the class-II aminoacyl-tRNA synthetase family. ProS type 3 subfamily. In terms of assembly, homodimer.

It is found in the cytoplasm. The enzyme catalyses tRNA(Pro) + L-proline + ATP = L-prolyl-tRNA(Pro) + AMP + diphosphate. In terms of biological role, catalyzes the attachment of proline to tRNA(Pro) in a two-step reaction: proline is first activated by ATP to form Pro-AMP and then transferred to the acceptor end of tRNA(Pro). The chain is Proline--tRNA ligase from Ureaplasma parvum serovar 3 (strain ATCC 27815 / 27 / NCTC 11736).